Consider the following 352-residue polypeptide: Biotin synthase (352 aa).

Positions 44 to 262 constitute a Radical SAM core domain; the sequence is NRVQVSTLLS…LAVARIMMPK (219 aa). 3 residues coordinate [4Fe-4S] cluster: Cys-59, Cys-63, and Cys-66. The [2Fe-2S] cluster site is built by Cys-103, Cys-134, Cys-194, and Arg-266.

The protein belongs to the radical SAM superfamily. Biotin synthase family. As to quaternary structure, homodimer. It depends on [4Fe-4S] cluster as a cofactor. [2Fe-2S] cluster serves as cofactor.

It carries out the reaction (4R,5S)-dethiobiotin + (sulfur carrier)-SH + 2 reduced [2Fe-2S]-[ferredoxin] + 2 S-adenosyl-L-methionine = (sulfur carrier)-H + biotin + 2 5'-deoxyadenosine + 2 L-methionine + 2 oxidized [2Fe-2S]-[ferredoxin]. The protein operates within cofactor biosynthesis; biotin biosynthesis; biotin from 7,8-diaminononanoate: step 2/2. In terms of biological role, catalyzes the conversion of dethiobiotin (DTB) to biotin by the insertion of a sulfur atom into dethiobiotin via a radical-based mechanism. The chain is Biotin synthase from Pseudomonas paraeruginosa (strain DSM 24068 / PA7) (Pseudomonas aeruginosa (strain PA7)).